Consider the following 184-residue polypeptide: Holliday junction branch migration complex subunit RuvA (184 aa).

The segment at 1–64 (MIKAIEGIIT…EDANLLYGFI (64 aa)) is domain I. The tract at residues 65-137 (KESEQRIFEM…LSDAKFGEIN (73 aa)) is domain II. A region of interest (flexible linker) is located at residue Asn137. The segment at 138 to 184 (SMPSYQNEAFMALESLGFKRDRISKVLNECSSNDTASLIKEALKKLA) is domain III.

Belongs to the RuvA family. As to quaternary structure, homotetramer. Forms an RuvA(8)-RuvB(12)-Holliday junction (HJ) complex. HJ DNA is sandwiched between 2 RuvA tetramers; dsDNA enters through RuvA and exits via RuvB. An RuvB hexamer assembles on each DNA strand where it exits the tetramer. Each RuvB hexamer is contacted by two RuvA subunits (via domain III) on 2 adjacent RuvB subunits; this complex drives branch migration. In the full resolvosome a probable DNA-RuvA(4)-RuvB(12)-RuvC(2) complex forms which resolves the HJ.

Its subcellular location is the cytoplasm. Its function is as follows. The RuvA-RuvB-RuvC complex processes Holliday junction (HJ) DNA during genetic recombination and DNA repair, while the RuvA-RuvB complex plays an important role in the rescue of blocked DNA replication forks via replication fork reversal (RFR). RuvA specifically binds to HJ cruciform DNA, conferring on it an open structure. The RuvB hexamer acts as an ATP-dependent pump, pulling dsDNA into and through the RuvAB complex. HJ branch migration allows RuvC to scan DNA until it finds its consensus sequence, where it cleaves and resolves the cruciform DNA. The protein is Holliday junction branch migration complex subunit RuvA of Campylobacter fetus subsp. fetus (strain 82-40).